A 201-amino-acid polypeptide reads, in one-letter code: Ribonuclease HII (201 aa).

Residues 10-200 enclose the RNase H type-2 domain; the sequence is LIEAGCDEAG…LGTDPQLEIP (191 aa). A divalent metal cation contacts are provided by Asp16, Glu17, and Asp108.

The protein belongs to the RNase HII family. Mn(2+) serves as cofactor. Mg(2+) is required as a cofactor.

The protein resides in the cytoplasm. The enzyme catalyses Endonucleolytic cleavage to 5'-phosphomonoester.. In terms of biological role, endonuclease that specifically degrades the RNA of RNA-DNA hybrids. This Phocaeicola vulgatus (strain ATCC 8482 / DSM 1447 / JCM 5826 / CCUG 4940 / NBRC 14291 / NCTC 11154) (Bacteroides vulgatus) protein is Ribonuclease HII.